Consider the following 323-residue polypeptide: GTP 3',8-cyclase (323 aa).

Residues 4–228 form the Radical SAM core domain; the sequence is KYGRSIDYLR…VPVNIQNNGP (225 aa). Position 13 (Arg-13) interacts with GTP. Cys-20 and Cys-24 together coordinate [4Fe-4S] cluster. Tyr-26 contributes to the S-adenosyl-L-methionine binding site. Cys-27 contacts [4Fe-4S] cluster. Arg-63 is a GTP binding site. Residue Gly-67 coordinates S-adenosyl-L-methionine. A GTP-binding site is contributed by Thr-94. Residue Ser-118 participates in S-adenosyl-L-methionine binding. Lys-155 contacts GTP. Position 189 (Met-189) interacts with S-adenosyl-L-methionine. Cys-252 and Cys-255 together coordinate [4Fe-4S] cluster. Residue 257 to 259 participates in GTP binding; that stretch reads RMR. [4Fe-4S] cluster is bound at residue Cys-269.

It belongs to the radical SAM superfamily. MoaA family. Monomer and homodimer. [4Fe-4S] cluster is required as a cofactor.

It catalyses the reaction GTP + AH2 + S-adenosyl-L-methionine = (8S)-3',8-cyclo-7,8-dihydroguanosine 5'-triphosphate + 5'-deoxyadenosine + L-methionine + A + H(+). The protein operates within cofactor biosynthesis; molybdopterin biosynthesis. Catalyzes the cyclization of GTP to (8S)-3',8-cyclo-7,8-dihydroguanosine 5'-triphosphate. This Petrotoga mobilis (strain DSM 10674 / SJ95) protein is GTP 3',8-cyclase.